A 271-amino-acid chain; its full sequence is Type III pantothenate kinase (271 aa).

6–13 (DVRNTNIV) is a binding site for ATP. 109-112 (GADR) contributes to the substrate binding site. Catalysis depends on Asp-111, which acts as the Proton acceptor. Residue Asp-131 coordinates K(+). Thr-134 lines the ATP pocket. Thr-186 is a binding site for substrate.

This sequence belongs to the type III pantothenate kinase family. In terms of assembly, homodimer. It depends on NH4(+) as a cofactor. The cofactor is K(+).

Its subcellular location is the cytoplasm. The catalysed reaction is (R)-pantothenate + ATP = (R)-4'-phosphopantothenate + ADP + H(+). The protein operates within cofactor biosynthesis; coenzyme A biosynthesis; CoA from (R)-pantothenate: step 1/5. Functionally, catalyzes the phosphorylation of pantothenate (Pan), the first step in CoA biosynthesis. The protein is Type III pantothenate kinase of Rhodococcus jostii (strain RHA1).